A 328-amino-acid chain; its full sequence is 3-dehydroquinate synthase (328 aa).

The protein belongs to the archaeal-type DHQ synthase family.

The catalysed reaction is 2-amino-2,3,7-trideoxy-D-lyxo-hept-6-ulosonate + NAD(+) + H2O = 3-dehydroquinate + NH4(+) + NADH + H(+). Functionally, catalyzes the oxidative deamination and cyclization of 2-amino-3,7-dideoxy-D-threo-hept-6-ulosonic acid (ADH) to yield 3-dehydroquinate (DHQ), which is fed into the canonical shikimic pathway of aromatic amino acid biosynthesis. The polypeptide is 3-dehydroquinate synthase (Methanosphaerula palustris (strain ATCC BAA-1556 / DSM 19958 / E1-9c)).